The following is a 160-amino-acid chain: Large ribosomal subunit protein uL16 (160 aa).

A compositionally biased stretch (polar residues) spans 138–148 (KNLEVSSQENT). A disordered region spans residues 138 to 160 (KNLEVSSQENTKNNKESQEEVKQ). The segment covering 149–160 (KNNKESQEEVKQ) has biased composition (basic and acidic residues).

This sequence belongs to the universal ribosomal protein uL16 family. As to quaternary structure, part of the 50S ribosomal subunit.

Binds 23S rRNA and is also seen to make contacts with the A and possibly P site tRNAs. The sequence is that of Large ribosomal subunit protein uL16 from Prochlorococcus marinus (strain MIT 9312).